Consider the following 400-residue polypeptide: Sensory histidine kinase/phosphatase NtrB (400 aa).

2 stretches are compositionally biased toward low complexity: residues 1-10 (MARASAAAPL) and 18-27 (RAPSSSYRPV). Residues 1-27 (MARASAAAPLPRRPARPRAPSSSYRPV) form a disordered region. In terms of domain architecture, PAS spans 29 to 99 (PCIDPSVMLN…IEQVQQGRHR (71 aa)). The Histidine kinase domain occupies 163–381 (MLGHEVKNPL…VFKVSLPMFD (219 aa)). Residue His166 is modified to Phosphohistidine; by autocatalysis.

Autophosphorylated.

Its subcellular location is the cytoplasm. The catalysed reaction is ATP + protein L-histidine = ADP + protein N-phospho-L-histidine.. Functionally, member of the two-component regulatory system NtrB/NtrC, which controls expression of the nitrogen-regulated (ntr) genes in response to nitrogen limitation. Under conditions of nitrogen limitation, NtrB autophosphorylates and transfers the phosphoryl group to NtrC. In the presence of nitrogen, acts as a phosphatase that dephosphorylates and inactivates NtrC. The polypeptide is Sensory histidine kinase/phosphatase NtrB (Azospirillum brasilense).